Reading from the N-terminus, the 169-residue chain is MAASLSSRLIKGIANLKAVRSSRLTSASVYQNGMMRFSSTVPSDSDTHDDFKPTQKVPPDSTDSLKDIVENDVKDNPVMIYMKGVPESPQCGFSSLAVRVLQQYNVPISSRNILEDQELKNAVKSFSHWPTFPQIFIKGEFIGGSDIILNMHKEGELEQKLKDVSGNQD.

The transit peptide at 1–37 directs the protein to the mitochondrion; that stretch reads MAASLSSRLIKGIANLKAVRSSRLTSASVYQNGMMRF. The segment at 38 to 61 is disordered; sequence SSTVPSDSDTHDDFKPTQKVPPDS. The Glutaredoxin domain occupies 66-168; sequence KDIVENDVKD…QKLKDVSGNQ (103 aa). Lysine 83 lines the glutathione pocket. Cysteine 91 provides a ligand contact to [2Fe-2S] cluster. Glutathione is bound by residues lysine 120, phenylalanine 132, and 145-146; that span reads SD.

Belongs to the glutaredoxin family. CGFS subfamily. [2Fe-2S]-bridged holo-homodimer. Interacts in vitro with SUFE1, BOLA1, BOLA2 and BOLA4. Interacts in vivo only with BOLA4.

Its subcellular location is the mitochondrion. In terms of biological role, may only reduce GSH-thiol disulfides, but not protein disulfides. Participates probably to the maturation of iron-sulfur proteins and to the regulation of the redox state of the BOLA proteins. The sequence is that of Monothiol glutaredoxin-S15, mitochondrial from Arabidopsis thaliana (Mouse-ear cress).